The chain runs to 122 residues: Cofilin/actin-depolymerizing factor homolog 1 (122 aa).

Residues 4–122 enclose the ADF-H domain; that stretch reads GIRVNDNCVT…ESAQDVADLK (119 aa).

The protein belongs to the actin-binding proteins ADF family. In terms of assembly, interacts with monomeric actin, does not bind to actin polymers.

Its subcellular location is the cytoplasm. It is found in the cytoskeleton. Not involved in actin polymerisation, instead functions to stimulate nucleotide exchange on monomeric actin and influence turnover of the small amount of cytosolic actin microfilaments. Essential for erythrocytic schizogony. The sequence is that of Cofilin/actin-depolymerizing factor homolog 1 from Plasmodium falciparum (isolate 3D7).